A 356-amino-acid chain; its full sequence is tRNA N6-adenosine threonylcarbamoyltransferase (356 aa).

Residues histidine 122, histidine 126, and tyrosine 143 each contribute to the a divalent metal cation site. Residues 143–147 (YVSGG), aspartate 175, glycine 190, glutamate 194, and asparagine 287 contribute to the substrate site. Aspartate 315 contacts a divalent metal cation.

Belongs to the KAE1 / TsaD family. As to quaternary structure, component of the EKC/KEOPS complex composed of at least BUD32, CGI121, GON7, KAE1 and PCC1; the whole complex dimerizes. A divalent metal cation is required as a cofactor.

Its subcellular location is the cytoplasm. It localises to the nucleus. The enzyme catalyses L-threonylcarbamoyladenylate + adenosine(37) in tRNA = N(6)-L-threonylcarbamoyladenosine(37) in tRNA + AMP + H(+). Functionally, component of the EKC/KEOPS complex that is required for the formation of a threonylcarbamoyl group on adenosine at position 37 (t(6)A37) in tRNAs that read codons beginning with adenine. The complex is probably involved in the transfer of the threonylcarbamoyl moiety of threonylcarbamoyl-AMP (TC-AMP) to the N6 group of A37. KAE1 likely plays a direct catalytic role in this reaction, but requires other protein(s) of the complex to fulfill this activity. The EKC/KEOPS complex also promotes both telomere uncapping and telomere elongation. The complex is required for efficient recruitment of transcriptional coactivators. The chain is tRNA N6-adenosine threonylcarbamoyltransferase from Chaetomium globosum (strain ATCC 6205 / CBS 148.51 / DSM 1962 / NBRC 6347 / NRRL 1970) (Soil fungus).